Here is a 1249-residue protein sequence, read N- to C-terminus: ATP-dependent helicase/nuclease subunit A (1249 aa).

In terms of domain architecture, UvrD-like helicase ATP-binding spans 5 to 482 (TNYTPSQQAV…IVLAENFRSV (478 aa)). Residue 26-33 (ASAGSGKT) coordinates ATP. Residues 521-811 (ADMPQTTNLL…NVMTIHGSKG (291 aa)) form the UvrD-like helicase C-terminal domain.

The protein belongs to the helicase family. AddA subfamily. Heterodimer of AddA and AddB/RexB. The cofactor is Mg(2+).

It catalyses the reaction Couples ATP hydrolysis with the unwinding of duplex DNA by translocating in the 3'-5' direction.. The catalysed reaction is ATP + H2O = ADP + phosphate + H(+). Functionally, the heterodimer acts as both an ATP-dependent DNA helicase and an ATP-dependent, dual-direction single-stranded exonuclease. Recognizes the chi site generating a DNA molecule suitable for the initiation of homologous recombination. The AddA nuclease domain is required for chi fragment generation; this subunit has the helicase and 3' -&gt; 5' nuclease activities. This chain is ATP-dependent helicase/nuclease subunit A, found in Lactiplantibacillus plantarum (strain ATCC BAA-793 / NCIMB 8826 / WCFS1) (Lactobacillus plantarum).